Reading from the N-terminus, the 189-residue chain is GTP cyclohydrolase 1 (189 aa).

Zn(2+)-binding residues include Cys79, His82, and Cys150.

This sequence belongs to the GTP cyclohydrolase I family. In terms of assembly, toroid-shaped homodecamer, composed of two pentamers of five dimers.

It carries out the reaction GTP + H2O = 7,8-dihydroneopterin 3'-triphosphate + formate + H(+). Its pathway is cofactor biosynthesis; 7,8-dihydroneopterin triphosphate biosynthesis; 7,8-dihydroneopterin triphosphate from GTP: step 1/1. This chain is GTP cyclohydrolase 1, found in Rickettsia massiliae (strain Mtu5).